Consider the following 91-residue polypeptide: Sec-independent protein translocase protein TatA (91 aa).

The chain crosses the membrane as a helical span at residues 1–21 (MGAMSPWHWAIVALVVIILFG). The interval 44–91 (KEMQNDNSTPAPTAQQSAPAELPVADTTTAPVTPPAPVQPQHTEPKSA) is disordered. The span at 51–74 (STPAPTAQQSAPAELPVADTTTAP) shows a compositional bias: low complexity.

It belongs to the TatA/E family. In terms of assembly, the Tat system comprises two distinct complexes: a TatABC complex, containing multiple copies of TatA, TatB and TatC subunits, and a separate TatA complex, containing only TatA subunits. Substrates initially bind to the TatABC complex, which probably triggers association of the separate TatA complex to form the active translocon.

The protein resides in the cell membrane. Part of the twin-arginine translocation (Tat) system that transports large folded proteins containing a characteristic twin-arginine motif in their signal peptide across membranes. TatA could form the protein-conducting channel of the Tat system. The polypeptide is Sec-independent protein translocase protein TatA (Rhodococcus jostii (strain RHA1)).